Reading from the N-terminus, the 657-residue chain is Hemocyanin B chain (657 aa).

Cys93 and Cys98 are disulfide-bonded. A glycan (N-linked (GlcNAc...) asparagine) is linked at Asn167. Cu cation is bound by residues His194, His198, His224, His344, His348, and His384. Disulfide bonds link Cys483–Cys502 and Cys562–Cys609.

The protein belongs to the tyrosinase family. Hemocyanin subfamily. In terms of assembly, hexamer of a number of different chains, of which A, B, and C have been identified. Hemolymph.

The protein resides in the secreted. It localises to the extracellular space. Hemocyanins are copper-containing oxygen carriers occurring freely dissolved in the hemolymph of many mollusks and arthropods. This is Hemocyanin B chain from Panulirus interruptus (California spiny lobster).